Reading from the N-terminus, the 208-residue chain is Hemocyanin, units E and F (208 aa).

His-1 contributes to the Cu cation binding site. A unit E region spans residues His-1–Leu-74. Cys-7 and Cys-18 form a disulfide bridge. The segment at residues Cys-19–His-21 is a cross-link (2'-(S-cysteinyl)-histidine (Cys-His)). The N-linked (GlcNAc...) asparagine glycan is linked to Asn-43. The interval Val-75 to Thr-208 is unit F. His-113 is a Cu cation binding site. Cys-119 and Cys-130 form a disulfide bridge. Positions Cys-131 to His-133 form a cross-link, 2'-(S-cysteinyl)-histidine (Cys-His). 2 residues coordinate Cu cation: His-133 and His-142.

Belongs to the tyrosinase family. Hemocyanin subfamily. Decamers of large identical subunits (390 kDa), each containing 8 globular oxygen-binding functional units. Requires Cu(2+) as cofactor.

In terms of biological role, hemocyanins are copper-containing oxygen carriers occurring freely dissolved in the hemolymph of many mollusks and arthropods. This is Hemocyanin, units E and F from Sepia officinalis (Common cuttlefish).